Here is a 133-residue protein sequence, read N- to C-terminus: Small ribosomal subunit protein uS8c (133 aa).

Belongs to the universal ribosomal protein uS8 family. In terms of assembly, part of the 30S ribosomal subunit.

It is found in the plastid. It localises to the chloroplast. One of the primary rRNA binding proteins, it binds directly to 16S rRNA central domain where it helps coordinate assembly of the platform of the 30S subunit. In Chlorokybus atmophyticus (Soil alga), this protein is Small ribosomal subunit protein uS8c (rps8).